The chain runs to 245 residues: Octanoyltransferase (245 aa).

The 189-residue stretch at 54-242 (QNAHEQVWLL…SFEQIFGPII (189 aa)) folds into the BPL/LPL catalytic domain. Substrate is bound by residues 93–100 (RGGEFTYH), 173–175 (AIG), and 186–188 (GVS). Residue Cys204 is the Acyl-thioester intermediate of the active site.

The protein belongs to the LipB family.

The protein resides in the cytoplasm. It catalyses the reaction octanoyl-[ACP] + L-lysyl-[protein] = N(6)-octanoyl-L-lysyl-[protein] + holo-[ACP] + H(+). Its pathway is protein modification; protein lipoylation via endogenous pathway; protein N(6)-(lipoyl)lysine from octanoyl-[acyl-carrier-protein]: step 1/2. In terms of biological role, catalyzes the transfer of endogenously produced octanoic acid from octanoyl-acyl-carrier-protein onto the lipoyl domains of lipoate-dependent enzymes. Lipoyl-ACP can also act as a substrate although octanoyl-ACP is likely to be the physiological substrate. This Bartonella henselae (strain ATCC 49882 / DSM 28221 / CCUG 30454 / Houston 1) (Rochalimaea henselae) protein is Octanoyltransferase.